The chain runs to 582 residues: Pescadillo homolog (582 aa).

A coiled-coil region spans residues 277-329; the sequence is LSALSASLARVVATVEEEENQLDNFPTEEEDQENMQAREKEQKEQEAQKRLFE. A compositionally biased stretch (acidic residues) spans 294–309; it reads EENQLDNFPTEEEDQE. The tract at residues 294–317 is disordered; it reads EENQLDNFPTEEEDQENMQAREKE. Positions 323-416 constitute a BRCT domain; it reads AQKRLFEGLK…MRLPVEDYFL (94 aa). Positions 445-454 are enriched in basic and acidic residues; it reads ALQRGEKPVQ. 2 disordered regions span residues 445–511 and 554–582; these read ALQR…ETGS and REVN…AKKQ. Residues 455 to 477 show a composition bias toward acidic residues; that stretch reads EEDEEEEDEDEEEDDDVDDEEFT. Basic and acidic residues predominate over residues 478–490; it reads EEKNLKKMEDTRA. Residues 517–582 adopt a coiled-coil conformation; that stretch reads RLEQEEKAEE…QKKQKKAKKQ (66 aa). The span at 572-582 shows a compositional bias: basic residues; sequence AQKKQKKAKKQ.

The protein belongs to the pescadillo family. Component of the PeBoW complex, composed of bop1, pes1 and wdr12. The complex is held together by bop1, which interacts with pes1 via its N-terminal domain and with wdr12 via a high-affinity interaction between the seven-bladed beta-propeller domains of the 2 proteins. The PeBoW complex associates with the 66S pre-ribosome.

It is found in the nucleus. The protein localises to the nucleolus. It localises to the nucleoplasm. Its function is as follows. Component of the PeBoW complex, which is required for maturation of 28S and 5.8S ribosomal RNAs and formation of the 60S ribosome. The chain is Pescadillo homolog (pes1) from Salmo salar (Atlantic salmon).